Consider the following 350-residue polypeptide: Biotin synthase (350 aa).

In terms of domain architecture, Radical SAM core spans 63-281; the sequence is GDIELATLLS…IAVARITMPK (219 aa). Positions 78, 82, and 85 each coordinate [4Fe-4S] cluster. Residues cysteine 122, cysteine 153, cysteine 213, and arginine 285 each coordinate [2Fe-2S] cluster.

Belongs to the radical SAM superfamily. Biotin synthase family. In terms of assembly, homodimer. Requires [4Fe-4S] cluster as cofactor. The cofactor is [2Fe-2S] cluster.

The catalysed reaction is (4R,5S)-dethiobiotin + (sulfur carrier)-SH + 2 reduced [2Fe-2S]-[ferredoxin] + 2 S-adenosyl-L-methionine = (sulfur carrier)-H + biotin + 2 5'-deoxyadenosine + 2 L-methionine + 2 oxidized [2Fe-2S]-[ferredoxin]. It functions in the pathway cofactor biosynthesis; biotin biosynthesis; biotin from 7,8-diaminononanoate: step 2/2. Functionally, catalyzes the conversion of dethiobiotin (DTB) to biotin by the insertion of a sulfur atom into dethiobiotin via a radical-based mechanism. In Acidovorax ebreus (strain TPSY) (Diaphorobacter sp. (strain TPSY)), this protein is Biotin synthase.